The primary structure comprises 293 residues: Ribosomal RNA small subunit methyltransferase A (293 aa).

6 residues coordinate S-adenosyl-L-methionine: asparagine 33, valine 35, glycine 60, glutamate 81, aspartate 111, and asparagine 130.

This sequence belongs to the class I-like SAM-binding methyltransferase superfamily. rRNA adenine N(6)-methyltransferase family. RsmA subfamily.

The protein resides in the cytoplasm. It catalyses the reaction adenosine(1518)/adenosine(1519) in 16S rRNA + 4 S-adenosyl-L-methionine = N(6)-dimethyladenosine(1518)/N(6)-dimethyladenosine(1519) in 16S rRNA + 4 S-adenosyl-L-homocysteine + 4 H(+). In terms of biological role, specifically dimethylates two adjacent adenosines (A1518 and A1519) in the loop of a conserved hairpin near the 3'-end of 16S rRNA in the 30S particle. May play a critical role in biogenesis of 30S subunits. This chain is Ribosomal RNA small subunit methyltransferase A, found in Corynebacterium glutamicum (strain R).